Here is a 170-residue protein sequence, read N- to C-terminus: Cathelicidin antimicrobial peptide (170 aa).

The N-terminal stretch at methionine 1–alanine 30 is a signal peptide. A propeptide spans glutamine 31–arginine 131 (cathelin-like domain (CLD)). Cystine bridges form between cysteine 86/cysteine 97 and cysteine 108/cysteine 125. Residues phenylalanine 150–glutamine 162 are active core.

The protein belongs to the cathelicidin family. Monomer, homodimer or homotrimer (in vitro). Oligomerizes as tetra- or hexamer in solution (in vitro). Post-translationally, proteolytically cleaved by proteinase PRTN3 into antibacterial peptide LL-37. Proteolytically cleaved by cathepsin CTSG and neutrophil elastase ELANE. In terms of processing, resistant to proteolytic degradation in solution, and when bound to both zwitterionic (mimicking mammalian membranes) and negatively charged membranes (mimicking bacterial membranes). After secretion onto the skin surface, the CAMP gene product is processed by a serine protease-dependent mechanism into multiple novel antimicrobial peptides distinct from and shorter than cathelicidin LL-37. These peptides show enhanced antimicrobial action, acquiring the ability to kill skin pathogens such as S.aureus, E.coli and C.albicans. These peptides have lost the ability to stimulate CXCL8/IL8 release from keratinocytes. The peptides act synergistically, killing bacteria at lower concentrations when present together, and maintain activity at increased salt condition.

Its subcellular location is the secreted. It is found in the vesicle. In terms of biological role, antimicrobial protein that is an integral component of the innate immune system. Binds to bacterial lipopolysaccharides (LPS). Acts via neutrophil N-formyl peptide receptors to enhance the release of CXCL2. Postsecretory processing generates multiple cathelicidin antimicrobial peptides with various lengths which act as a topical antimicrobial defense in sweat on skin. The unprocessed precursor form, cathelicidin antimicrobial peptide, inhibits the growth of Gram-negative E.coli and E.aerogenes with efficiencies comparable to that of the mature peptide LL-37 (in vitro). Antimicrobial peptide that is an integral component of the innate immune system. Binds to bacterial lipopolysaccharides (LPS). Causes membrane permeabilization by forming transmembrane pores (in vitro). Causes lysis of E.coli. Exhibits antimicrobial activity against Gram-negative bacteria such as P.aeruginosa, S.typhimurium, E.aerogenes, E.coli and P.syringae, Gram-positive bacteria such as L.monocytogenes, S.epidermidis, S.pyogenes and S.aureus, as well as vancomycin-resistant enterococci (in vitro). Exhibits antimicrobial activity against methicillin-resistant S.aureus, P.mirabilis, and C.albicans in low-salt media, but not in media containing 100 mM NaCl (in vitro). Forms chiral supramolecular assemblies with quinolone signal (PQS) molecules of P.aeruginosa, which may lead to interference of bacterial quorum signaling and perturbance of bacterial biofilm formation. May form supramolecular fiber-like assemblies on bacterial membranes. Induces cytokine and chemokine producation as well as TNF/TNFA and CSF2/GMCSF production in normal human keratinocytes. Exhibits hemolytic activity against red blood cells. Functionally, exhibits antimicrobial activity against E.coli and B.megaterium (in vitro). The sequence is that of Cathelicidin antimicrobial peptide from Nomascus gabriellae (Red-cheeked gibbon).